The chain runs to 601 residues: Adenine deaminase (601 aa).

This sequence belongs to the metallo-dependent hydrolases superfamily. Adenine deaminase family. The cofactor is Mn(2+).

It catalyses the reaction adenine + H2O + H(+) = hypoxanthine + NH4(+). The polypeptide is Adenine deaminase (Ruegeria sp. (strain TM1040) (Silicibacter sp.)).